The sequence spans 465 residues: 5'-adenylylsulfate reductase 1, chloroplastic (465 aa).

Residues 1-53 constitute a chloroplast transit peptide; that stretch reads MAMSVNVSSSSSSGIINSRFGVSLEPKVSQIGSLRLLDRVHVAPVSLNLSGKR. The tract at residues 73 to 327 is reductase domain; that stretch reads LAATMVAEIA…KAKECGLHKG (255 aa). Residues 344–465 form the Thioredoxin domain; the sequence is SAVADIFKSE…SLTSFLNLVR (122 aa). Catalysis depends on nucleophile residues Cys385 and Cys388. An intrachain disulfide couples Cys385 to Cys388.

The protein belongs to the APS reductase family. Requires [4Fe-4S] cluster as cofactor. Leaves, roots and stem.

The protein localises to the plastid. It localises to the chloroplast. The enzyme catalyses glutathione disulfide + sulfite + AMP + 2 H(+) = adenosine 5'-phosphosulfate + 2 glutathione. Its activity is regulated as follows. Stimulated by sodium sulfate &gt; ammonium sulfate and is sensitive to inactivation by 5'AMP. Reduces sulfate for Cys biosynthesis. Substrate preference is adenosine-5'-phosphosulfate (APS) &gt;&gt; 3'-phosphoadenosine-5'-phosphosulfate (PAPS). Uses glutathione or DTT as source of protons. The chain is 5'-adenylylsulfate reductase 1, chloroplastic (APR1) from Arabidopsis thaliana (Mouse-ear cress).